A 334-amino-acid chain; its full sequence is 5-formaminoimidazole-4-carboxamide-1-(beta)-D-ribofuranosyl 5'-monophosphate synthetase (334 aa).

Positions 10, 11, 71, and 75 each coordinate 5-amino-1-(5-phospho-beta-D-ribosyl)imidazole-4-carboxamide. An ATP-grasp domain is found at 78–325 (IELVENMKVP…IAMEIREAIE (248 aa)). Residues 132–142 (KPHGAKGGKGY), 173–176 (QEYV), and Glu-204 each bind ATP. Residue Asn-232 participates in 5-amino-1-(5-phospho-beta-D-ribosyl)imidazole-4-carboxamide binding. Mg(2+) is bound by residues Glu-270 and Glu-283.

This sequence belongs to the phosphohexose mutase family. As to quaternary structure, homotrimer and homohexamer. Requires Mg(2+) as cofactor. Mn(2+) serves as cofactor.

It carries out the reaction 5-amino-1-(5-phospho-beta-D-ribosyl)imidazole-4-carboxamide + formate + ATP = 5-formamido-1-(5-phospho-D-ribosyl)imidazole-4-carboxamide + ADP + phosphate. It participates in purine metabolism; IMP biosynthesis via de novo pathway; 5-formamido-1-(5-phospho-D-ribosyl)imidazole-4-carboxamide from 5-amino-1-(5-phospho-D-ribosyl)imidazole-4-carboxamide (formate route): step 1/1. In terms of biological role, catalyzes the ATP- and formate-dependent formylation of 5-aminoimidazole-4-carboxamide-1-beta-d-ribofuranosyl 5'-monophosphate (AICAR) to 5-formaminoimidazole-4-carboxamide-1-beta-d-ribofuranosyl 5'-monophosphate (FAICAR) in the absence of folates. This chain is 5-formaminoimidazole-4-carboxamide-1-(beta)-D-ribofuranosyl 5'-monophosphate synthetase, found in Pyrococcus furiosus (strain ATCC 43587 / DSM 3638 / JCM 8422 / Vc1).